The following is a 311-amino-acid chain: MQPKVRTAEIVKQFNLKIVTGEEGLHRPILTADLCRPGLVLAGYYAYYPAERLQILGKTELTFFNNLTYEEQLERANVLCTDETPGILITRGFDVPEAIVKAADETNVPLLTTKGHTTSVESQITNFLEAELAPTTAMHGVLVDIYGVGVFIKGASGVGKSETALELVKRGHRLVADDSVEIRQTGDGILVGTAPKLIQHLLEIRGIGIIDVMTLFGAGAVRSHKKISLVCNLEIWDQAKVYDRVGLDQETLQIIDTEIPFLTIPVRPGRNLAVIIEVAAMNYRLKNMGINTAEEFAGRLAQAIEDGNGGL.

Residues H139 and K160 contribute to the active site. ATP is bound at residue 154–161 (GASGVGKS). Residue S161 coordinates Mg(2+). D178 serves as the catalytic Proton acceptor; for phosphorylation activity. Proton donor; for dephosphorylation activity. The important for the catalytic mechanism of both phosphorylation and dephosphorylation stretch occupies residues 202-211 (LEIRGIGIID). E203 is a binding site for Mg(2+). R244 is an active-site residue. The important for the catalytic mechanism of dephosphorylation stretch occupies residues 265 to 270 (PVRPGR).

Belongs to the HPrK/P family. As to quaternary structure, homohexamer. Mg(2+) is required as a cofactor.

The enzyme catalyses [HPr protein]-L-serine + ATP = [HPr protein]-O-phospho-L-serine + ADP + H(+). It carries out the reaction [HPr protein]-O-phospho-L-serine + phosphate + H(+) = [HPr protein]-L-serine + diphosphate. Functionally, catalyzes the ATP- as well as the pyrophosphate-dependent phosphorylation of a specific serine residue in HPr, a phosphocarrier protein of the phosphoenolpyruvate-dependent sugar phosphotransferase system (PTS). HprK/P also catalyzes the pyrophosphate-producing, inorganic phosphate-dependent dephosphorylation (phosphorolysis) of seryl-phosphorylated HPr (P-Ser-HPr). The two antagonistic activities of HprK/P are regulated by several intracellular metabolites, which change their concentration in response to the absence or presence of rapidly metabolisable carbon sources (glucose, fructose, etc.) in the growth medium. Therefore, by controlling the phosphorylation state of HPr, HPrK/P is a sensor enzyme that plays a major role in the regulation of carbon metabolism and sugar transport: it mediates carbon catabolite repression (CCR), and regulates PTS-catalyzed carbohydrate uptake and inducer exclusion. The protein is HPr kinase/phosphorylase of Exiguobacterium sibiricum (strain DSM 17290 / CCUG 55495 / CIP 109462 / JCM 13490 / 255-15).